Here is a 174-residue protein sequence, read N- to C-terminus: Peptide methionine sulfoxide reductase MsrA (174 aa).

Residue C11 is part of the active site.

This sequence belongs to the MsrA Met sulfoxide reductase family.

The enzyme catalyses L-methionyl-[protein] + [thioredoxin]-disulfide + H2O = L-methionyl-(S)-S-oxide-[protein] + [thioredoxin]-dithiol. It catalyses the reaction [thioredoxin]-disulfide + L-methionine + H2O = L-methionine (S)-S-oxide + [thioredoxin]-dithiol. Has an important function as a repair enzyme for proteins that have been inactivated by oxidation. Catalyzes the reversible oxidation-reduction of methionine sulfoxide in proteins to methionine. The protein is Peptide methionine sulfoxide reductase MsrA of Haloquadratum walsbyi (strain DSM 16790 / HBSQ001).